The sequence spans 331 residues: L-lactate dehydrogenase A chain (331 aa).

NAD(+)-binding positions include 29-57 (GMVG…MEDK) and Arg98. Substrate-binding residues include Arg105, Asn137, and Arg168. An NAD(+)-binding site is contributed by Asn137. His192 serves as the catalytic Proton acceptor. Substrate is bound at residue Thr247.

The protein belongs to the LDH/MDH superfamily. LDH family. In terms of assembly, homotetramer.

The protein localises to the cytoplasm. The enzyme catalyses (S)-lactate + NAD(+) = pyruvate + NADH + H(+). Its pathway is fermentation; pyruvate fermentation to lactate; (S)-lactate from pyruvate: step 1/1. In terms of biological role, interconverts simultaneously and stereospecifically pyruvate and lactate with concomitant interconversion of NADH and NAD(+). The protein is L-lactate dehydrogenase A chain (ldha) of Parachaenichthys charcoti (Charcot's dragonfish).